The following is a 119-amino-acid chain: Protein TusC (119 aa).

It belongs to the DsrF/TusC family. In terms of assembly, heterohexamer, formed by a dimer of trimers. The hexameric TusBCD complex contains 2 copies each of TusB, TusC and TusD. The TusBCD complex interacts with TusE.

Its subcellular location is the cytoplasm. In terms of biological role, part of a sulfur-relay system required for 2-thiolation of 5-methylaminomethyl-2-thiouridine (mnm(5)s(2)U) at tRNA wobble positions. The polypeptide is Protein TusC (Escherichia coli O157:H7).